A 234-amino-acid chain; its full sequence is Chalcone--flavanone isomerase 1 (234 aa).

Substrate is bound by residues T50, N115, and S192.

Belongs to the chalcone isomerase family.

It carries out the reaction a chalcone = a flavanone.. The protein operates within secondary metabolite biosynthesis; flavonoid biosynthesis. Its function is as follows. Catalyzes the intramolecular cyclization of bicyclic chalcones into tricyclic (S)-flavanones. Responsible for the isomerization of 4,2',4',6'-tetrahydroxychalcone (also termed chalcone) into naringenin. This chain is Chalcone--flavanone isomerase 1 (CHI1), found in Vitis vinifera (Grape).